We begin with the raw amino-acid sequence, 228 residues long: Endo-1,4-beta-xylanase B (228 aa).

The first 19 residues, 1-19, serve as a signal peptide directing secretion; the sequence is MVSFTYLLAAVSAVTGAVA. A GH11 domain is found at 37–227; the sequence is KRTSPTTGVN…SSGQATMTVS (191 aa). The Nucleophile role is filled by glutamate 122. Glutamate 214 functions as the Proton donor in the catalytic mechanism.

It belongs to the glycosyl hydrolase 11 (cellulase G) family.

The protein localises to the secreted. The catalysed reaction is Endohydrolysis of (1-&gt;4)-beta-D-xylosidic linkages in xylans.. Its pathway is glycan degradation; xylan degradation. Inhibited by the proteinaceous endoxylanase inhibitor I from T.aestivum (TAXI-I). Its function is as follows. Endo-1,4-beta-xylanase involved in the hydrolysis of xylan, a major structural heterogeneous polysaccharide found in plant biomass representing the second most abundant polysaccharide in the biosphere, after cellulose. Plays an important role in causing fusarium head blight (FHB) on cereal crops. Induces cell death and hydrogen peroxide accumulation in infected wheat leaves. In Gibberella zeae (strain ATCC MYA-4620 / CBS 123657 / FGSC 9075 / NRRL 31084 / PH-1) (Wheat head blight fungus), this protein is Endo-1,4-beta-xylanase B (XYLB).